The primary structure comprises 304 residues: Lipid droplet-associated hydrolase (304 aa).

Catalysis depends on S119, which acts as the Nucleophile. Residues D250 and H279 each act as charge relay system in the active site.

It belongs to the AB hydrolase superfamily. LDAH family.

It localises to the lipid droplet. The catalysed reaction is a cholesterol ester + H2O = cholesterol + a fatty acid + H(+). Its function is as follows. Probable serine lipid hydrolase associated with lipid droplets. Has low cholesterol esterase activity. Appears to lack triglyceride lipase activity. Involved in cholesterol and triglyceride homeostasis; stimulates cellular triglyceride accumulation and cellular cholesterol release. This Dictyostelium discoideum (Social amoeba) protein is Lipid droplet-associated hydrolase.